The following is a 202-amino-acid chain: MNTLYLGSNSPRRMEILTQLGYRVIQLPAGIDESVKAGETPFAYVQRMAEEKNRTALTLFCETNGTMPDFPLITADTCVVSDGIILGKPRSQAEAIEFLNRLSGKQHTVLTAVCIHYRGKTSSRVQTNRVVFKPLSSEEISAYVQSGEPMDKAGAYAVQGIGGIFIQSIEGSFSGIMGLPVYETVSMLQDLGYRSPLSALKP.

The Proton acceptor role is filled by D76.

It belongs to the Maf family. YhdE subfamily. It depends on a divalent metal cation as a cofactor.

It localises to the cytoplasm. The enzyme catalyses dTTP + H2O = dTMP + diphosphate + H(+). It catalyses the reaction UTP + H2O = UMP + diphosphate + H(+). Functionally, nucleoside triphosphate pyrophosphatase that hydrolyzes dTTP and UTP. May have a dual role in cell division arrest and in preventing the incorporation of modified nucleotides into cellular nucleic acids. In Neisseria meningitidis serogroup B (strain ATCC BAA-335 / MC58), this protein is dTTP/UTP pyrophosphatase.